Reading from the N-terminus, the 501-residue chain is Pyruvate kinase (501 aa).

Position 50 (R50) interacts with substrate. The K(+) site is built by N52, S54, D85, and T86. Position 52–55 (52–55 (NFSH)) interacts with ATP. ATP contacts are provided by R92 and K178. E243 contacts Mg(2+). 3 residues coordinate substrate: G266, D267, and T299. D267 lines the Mg(2+) pocket.

This sequence belongs to the pyruvate kinase family. In terms of assembly, homotetramer. Mg(2+) serves as cofactor. It depends on K(+) as a cofactor.

The enzyme catalyses pyruvate + ATP = phosphoenolpyruvate + ADP + H(+). It participates in carbohydrate degradation; glycolysis; pyruvate from D-glyceraldehyde 3-phosphate: step 5/5. The protein is Pyruvate kinase (PYK1) of Lachancea kluyveri (strain ATCC 58438 / CBS 3082 / BCRC 21498 / NBRC 1685 / JCM 7257 / NCYC 543 / NRRL Y-12651) (Yeast).